The sequence spans 132 residues: Phosphomevalonate dehydratase small subunit (132 aa).

The Proton acceptor role is filled by S58.

This sequence belongs to the AcnX type II small subunit family. Heterodimer composed of a large subunit (PMDh-L) and a small subunit (PMDh-S).

The catalysed reaction is (R)-5-phosphomevalonate = (2E)-3-methyl-5-phosphooxypent-2-enoate + H2O. The protein operates within isoprenoid biosynthesis; isopentenyl diphosphate biosynthesis via mevalonate pathway. Neither the addition of 1 mM Mg(2+) nor 1 mM Mn(2+) has a significant effect on the activity, whereas Zn(2+) causes almost complete inactivation. Strongly inhibited by H(2)O(2), but not by EDTA or iodoacetamide. Functionally, component of a hydro-lyase that catalyzes the dehydration of mevalonate 5-phosphate (MVA5P) to form trans-anhydromevalonate 5-phosphate (tAHMP). Involved in the archaeal mevalonate (MVA) pathway, which provides fundamental precursors for isoprenoid biosynthesis, such as isopentenyl diphosphate (IPP) and dimethylallyl diphosphate (DMAPP). This chain is Phosphomevalonate dehydratase small subunit, found in Aeropyrum pernix (strain ATCC 700893 / DSM 11879 / JCM 9820 / NBRC 100138 / K1).